Consider the following 42-residue polypeptide: MELIKQIFPFANSEIITAAVVCFSMTLFGLSLGFGLLKVQGE.

The chain crosses the membrane as a helical span at residues 19–37; the sequence is AVVCFSMTLFGLSLGFGLL.

It belongs to the PetM family. The 4 large subunits of the cytochrome b6-f complex are cytochrome b6, subunit IV (17 kDa polypeptide, PetD), cytochrome f and the Rieske protein, while the 4 small subunits are PetG, PetL, PetM and PetN. The complex functions as a dimer.

It localises to the plastid. Its subcellular location is the chloroplast thylakoid membrane. Its function is as follows. Component of the cytochrome b6-f complex, which mediates electron transfer between photosystem II (PSII) and photosystem I (PSI), cyclic electron flow around PSI, and state transitions. The protein is Cytochrome b6-f complex subunit 7 of Phaeodactylum tricornutum (strain CCAP 1055/1).